A 500-amino-acid polypeptide reads, in one-letter code: Probable cytosol aminopeptidase (500 aa).

Mn(2+)-binding residues include K265 and D270. K277 is an active-site residue. Residues D288, D347, and E349 each contribute to the Mn(2+) site. R351 is an active-site residue.

Belongs to the peptidase M17 family. Mn(2+) is required as a cofactor.

The protein localises to the cytoplasm. It carries out the reaction Release of an N-terminal amino acid, Xaa-|-Yaa-, in which Xaa is preferably Leu, but may be other amino acids including Pro although not Arg or Lys, and Yaa may be Pro. Amino acid amides and methyl esters are also readily hydrolyzed, but rates on arylamides are exceedingly low.. The catalysed reaction is Release of an N-terminal amino acid, preferentially leucine, but not glutamic or aspartic acids.. In terms of biological role, presumably involved in the processing and regular turnover of intracellular proteins. Catalyzes the removal of unsubstituted N-terminal amino acids from various peptides. This chain is Probable cytosol aminopeptidase, found in Rickettsia typhi (strain ATCC VR-144 / Wilmington).